The following is a 149-amino-acid chain: Transcriptional regulator MraZ (149 aa).

2 consecutive SpoVT-AbrB domains span residues 7-54 and 83-126; these read KYVN…GISH and ALQL…QPQN.

Belongs to the MraZ family. In terms of assembly, forms oligomers.

The protein resides in the cytoplasm. It is found in the nucleoid. In Rickettsia canadensis (strain McKiel), this protein is Transcriptional regulator MraZ.